A 203-amino-acid polypeptide reads, in one-letter code: UPF0637 protein EF_3078 (203 aa).

Belongs to the UPF0637 family.

The polypeptide is UPF0637 protein EF_3078 (Enterococcus faecalis (strain ATCC 700802 / V583)).